The primary structure comprises 340 residues: MIILAIESSCDETGVGIAELGDDGSVTLLADEVASSVDEHARFGGVVPEIASRAHLEALGPTMRRALATAGVDKPDVVAATIGPGLAGALLVGVAAAKAYAAAWQVPFYAVNHLGGHLAADVFDHGPLPESIGLLVSGGHTHLLHVRSLGEPIIELGSTVDDAAGEAYDKIARLLGLGYPGGRVLDELAREGDPKAITFPRGMTGPRDEPYAFSFSGLKTAVARYVESHPEASQADVAAGFQEAVADVLTAKAVRAAGDLGVSTLLIAGGVAANSRLRELAAQRCEAAGMTLRIPRPRLCTDNGAMIASFAAHLIAAGAAPSPLDAASDPGLPVVQGQVA.

H113 and H117 together coordinate Fe cation. Residues 135–139, D169, G182, D186, and N274 each bind substrate; that span reads LVSGG. D302 is a binding site for Fe cation.

The protein belongs to the KAE1 / TsaD family. Requires Fe(2+) as cofactor.

Its subcellular location is the cytoplasm. The catalysed reaction is L-threonylcarbamoyladenylate + adenosine(37) in tRNA = N(6)-L-threonylcarbamoyladenosine(37) in tRNA + AMP + H(+). Required for the formation of a threonylcarbamoyl group on adenosine at position 37 (t(6)A37) in tRNAs that read codons beginning with adenine. Is involved in the transfer of the threonylcarbamoyl moiety of threonylcarbamoyl-AMP (TC-AMP) to the N6 group of A37, together with TsaE and TsaB. TsaD likely plays a direct catalytic role in this reaction. This Mycolicibacterium gilvum (strain PYR-GCK) (Mycobacterium gilvum (strain PYR-GCK)) protein is tRNA N6-adenosine threonylcarbamoyltransferase.